The primary structure comprises 385 residues: Protein pelota homolog (385 aa).

Belongs to the eukaryotic release factor 1 family. Pelota subfamily. As to quaternary structure, component of the Pelota-HBS1L complex, also named Dom34-Hbs1 complex, composed of PELO and HBS1L. Requires a divalent metal cation as cofactor.

It localises to the cytoplasm. In terms of biological role, component of the Pelota-HBS1L complex, a complex that recognizes stalled ribosomes and triggers the No-Go Decay (NGD) pathway. In the Pelota-HBS1L complex, PELO recognizes ribosomes stalled at the 3' end of an mRNA and engages stalled ribosomes by destabilizing mRNA in the mRNA channel. Following mRNA extraction from stalled ribosomes by the SKI complex, the Pelota-HBS1L complex promotes recruitment of ABCE1, which drives the disassembly of stalled ribosomes, followed by degradation of damaged mRNAs as part of the NGD pathway. The protein is Protein pelota homolog (PELO) of Gallus gallus (Chicken).